Reading from the N-terminus, the 222-residue chain is MKKHLLPLALLFSGISPAQALDVGDISSFMNSDSSTLSKTIKNSTDSGRLINIRLERLSSPLDDGQVISMDKPDELLLTPASLLLPAQASEVIRFFYKGPADEKERYYRIVWFDQALSDAQRDNANRSAVATASARIGTILVVAPRQANYHFQYANGSLTNTGNATLRILAYGPCLKAANGKECKENYYLMPGKSRRFTRVDTADNKGRVALWQGDKFIPVK.

A signal peptide spans Met-1–Ala-20.

Belongs to the EcpB/EcpE family.

In terms of biological role, part of the ecpRABCDE operon, which encodes the E.coli common pilus (ECP). ECP is found in both commensal and pathogenic strains and plays a dual role in early-stage biofilm development and host cell recognition. The sequence is that of Probable fimbrial chaperone EcpB (ecpB) from Escherichia coli (strain K12).